The chain runs to 61 residues: Small ribosomal subunit protein uS14 (61 aa).

Zn(2+)-binding residues include Cys24, Cys27, Cys40, and Cys43.

Belongs to the universal ribosomal protein uS14 family. Zinc-binding uS14 subfamily. As to quaternary structure, part of the 30S ribosomal subunit. Contacts proteins S3 and S10. Requires Zn(2+) as cofactor.

Functionally, binds 16S rRNA, required for the assembly of 30S particles and may also be responsible for determining the conformation of the 16S rRNA at the A site. The sequence is that of Small ribosomal subunit protein uS14 from Fervidobacterium nodosum (strain ATCC 35602 / DSM 5306 / Rt17-B1).